The chain runs to 91 residues: Probable Fe(2+)-trafficking protein (91 aa).

The protein belongs to the Fe(2+)-trafficking protein family.

Could be a mediator in iron transactions between iron acquisition and iron-requiring processes, such as synthesis and/or repair of Fe-S clusters in biosynthetic enzymes. The sequence is that of Probable Fe(2+)-trafficking protein from Paraburkholderia phytofirmans (strain DSM 17436 / LMG 22146 / PsJN) (Burkholderia phytofirmans).